Consider the following 349-residue polypeptide: Rhodopsin (349 aa).

At 1–33 (TEGPYFYIPMSNATGVVRSPYEYPQYYLVYPAA) the chain is on the extracellular side. N12 is a glycosylation site (N-linked (GlcNAc...) asparagine). Residues 34 to 58 (FAVLGAYMFFLIIFGFPVNFLTLYV) form a helical membrane-spanning segment. At 59 to 70 (TIEHKKLRTPLN) the chain is on the cytoplasmic side. The chain crosses the membrane as a helical span at residues 71 to 93 (YILLNLAVADLFMVIGGFTTTIY). Over 94 to 107 (TSMHGYFVLGRLGC) the chain is Extracellular. A disulfide bond links C107 and C184. Residues 108-130 (NLEGFSATLGGMISLWSLVVLAV) form a helical membrane-spanning segment. The short motif at 131 to 133 (ERW) is the 'Ionic lock' involved in activated form stabilization element. The Cytoplasmic portion of the chain corresponds to 131-149 (ERWVVVCKPMSNFRFGENH). The helical transmembrane segment at 150 to 170 (AIMGVTLTWAMGLACTVPPLV) threads the bilayer. Topologically, residues 171-199 (GWSRYIPEGMQCSCGIDYYTRAEGFNNES) are extracellular. Residue N197 is glycosylated (N-linked (GlcNAc...) asparagine). The chain crosses the membrane as a helical span at residues 200–221 (FVLYMFVCHFSFPLVVIFFCYG). Residues 222–249 (RLLCAVKEAAAAQQESETTQRAEREVTR) are Cytoplasmic-facing. The chain crosses the membrane as a helical span at residues 250-271 (MVILMVIGFLVCWLPYASVAWY). The Extracellular portion of the chain corresponds to 272 to 283 (IFTHQGSEFGPL). A helical membrane pass occupies residues 284–305 (FMTIPAFFAKSSAIYNPVIYIC). Position 293 is an N6-(retinylidene)lysine (K293). The Cytoplasmic segment spans residues 306-349 (LNKQFRQCMLTTLFCGKNPFEEEEGASSTKTEASSASSSSVSPA). The S-palmitoyl cysteine moiety is linked to residue C320. Residues 326-349 (EEEEGASSTKTEASSASSSSVSPA) form a disordered region. Residues 331 to 349 (ASSTKTEASSASSSSVSPA) show a composition bias toward low complexity.

The protein belongs to the G-protein coupled receptor 1 family. Opsin subfamily. Post-translationally, phosphorylated on some or all of the serine and threonine residues present in the C-terminal region. Contains one covalently linked retinal chromophore.

The protein resides in the membrane. It is found in the cell projection. It localises to the cilium. Its subcellular location is the photoreceptor outer segment. Its function is as follows. Photoreceptor required for image-forming vision at low light intensity. While most salt water fish species use retinal as chromophore, most freshwater fish use 3-dehydroretinal, or a mixture of retinal and 3-dehydroretinal. Light-induced isomerization of 11-cis to all-trans retinal triggers a conformational change that activates signaling via G-proteins. Subsequent receptor phosphorylation mediates displacement of the bound G-protein alpha subunit by arrestin and terminates signaling. The sequence is that of Rhodopsin (rho) from Myripristis berndti (Bigscale soldierfish).